The primary structure comprises 474 residues: Protein CyaE (474 aa).

Positions 1–31 are cleaved as a signal peptide; it reads MAAVQVRRRGRALALALWAGFALSVGGGVRA.

This sequence belongs to the outer membrane factor (OMF) (TC 1.B.17) family.

The protein resides in the cell outer membrane. Functionally, cyaE is necessary for transport of calmodulin-sensitive adenylate cyclase-hemolysin (cyclolysin). In Bordetella pertussis (strain Tohama I / ATCC BAA-589 / NCTC 13251), this protein is Protein CyaE (cyaE).